The primary structure comprises 556 residues: Cytochrome P450 monooxygenase polC (556 aa).

Residues 17 to 37 (LCFAISLLCAVAIATFLHKLY) form a helical membrane-spanning segment. Cysteine 479 contributes to the heme binding site.

It belongs to the cytochrome P450 family. Heme is required as a cofactor.

The protein localises to the membrane. The enzyme catalyses motiol + 3 reduced [NADPH--hemoprotein reductase] + 3 O2 = 4beta-carboxyl motiol + 3 oxidized [NADPH--hemoprotein reductase] + 4 H2O + 4 H(+). The protein operates within secondary metabolite biosynthesis; terpenoid biosynthesis. Cytochrome P450 monooxygenase; part of the gene cluster that mediates the biosynthesis of antifungal fernane-type triterpenoid polytolypin. PolC uses motiol as a substrate and converts the methyl group at position C-4 to a carboxyl group. Within the pathway, the triterpene cyclase polA first catalyzes the cyclization of 2,3-oxidosqualene to motiol, polC converts the 4-alpha-methyl group of motiol to a carboxyl group, polB is responsible for appending a hydroxyl group at the 2-alpha position and polE is a dual functional P450, which can catalyze the formation of both the 1-beta-hydroxyl group and 10-beta-carboxyl group. The protein is Cytochrome P450 monooxygenase polC of Polytolypa hystricis (strain UAMH7299).